The chain runs to 996 residues: GPI ethanolamine phosphate transferase 1 (996 aa).

Residues 1–8 (MAAFPRFR) lie on the Cytoplasmic side of the membrane. A helical membrane pass occupies residues 9 to 29 (FLAIAVIFHFAYIFSIFDIYF). Over 30–463 (VSPIETGMRL…LQTYDWLFLR (434 aa)) the chain is Lumenal. N-linked (GlcNAc...) asparagine glycosylation is found at N47, N147, and N210. A helical membrane pass occupies residues 464 to 484 (ALITIGYLGWIAYALTTVVDL). Over 485-495 (HVLHGRVRPSR) the chain is Cytoplasmic. A helical transmembrane segment spans residues 496-516 (TLGGGLFFTSVLVALYASLVI). Over 517–518 (SK) the chain is Lumenal. A helical transmembrane segment spans residues 519–539 (SPLTYYVYAFFPVFFWEEVYA). The Cytoplasmic segment spans residues 540 to 560 (HRESLAAGRKELLGHINSGGS). A helical membrane pass occupies residues 561 to 581 (VASFVLNSALYVGVIESLALG). The Lumenal portion of the chain corresponds to 582-586 (YIHRE). A helical transmembrane segment spans residues 587-607 (ILSVLFVLGSFWPFTHGLSFL). Over 608–612 (KKHGA) the chain is Cytoplasmic. The chain crosses the membrane as a helical span at residues 613-633 (LSATWFLACIAMSTFTLLPAM). Topologically, residues 634–637 (KAEN) are lumenal. A helical transmembrane segment spans residues 638–658 (VNLITIGGVLMVVIGLLYLIF). Residues 659-681 (EDFVLADFSWNAKPTSRNHLSRS) lie on the Cytoplasmic side of the membrane. A helical membrane pass occupies residues 682–702 (LVGIQVGLTVLSIIITRSSAL). At 703 to 715 (SLQAKQGLPRGNQ) the chain is on the lumenal side. A helical transmembrane segment spans residues 716–734 (IMGWVTLVASLLMPLAYRL). Over 735–754 (RPNNHYMHRILVIFLTCAPT) the chain is Cytoplasmic. The helical transmembrane segment at 755-775 (FVILTISYEGLFYLVFSALLV) threads the bilayer. At 776-822 (SWVRLEHAVQKFTSSKAPQTAATKKPTTTTESHLPAPFRPLTLHDAR) the chain is on the lumenal side. The chain crosses the membrane as a helical span at residues 823 to 843 (VALFFFILLQSAFFSTGNVAS). Over 844 to 865 (VSSFSLDSVYRLIPIFDPFSQG) the chain is Cytoplasmic. A helical membrane pass occupies residues 866–886 (AMLILKLMIPFALISANLGIL). The Lumenal portion of the chain corresponds to 887 to 895 (NKRLGVAPS). Residues 896 to 916 (ALFMVVMGISDILTLYFFWVV) form a helical membrane-spanning segment. Residues 917-932 (KDEGSWLEIGSTISHF) are Cytoplasmic-facing. A helical transmembrane segment spans residues 933–953 (VIASLLCVFVSALEPVSAAFI). Residues 954–996 (AGVEVGEESELKEEGKVAEKVVEKVNEAVEGLVSGGDGGGDES) lie on the Lumenal side of the membrane.

The protein belongs to the PIGG/PIGN/PIGO family. PIGN subfamily.

It is found in the endoplasmic reticulum membrane. It participates in glycolipid biosynthesis; glycosylphosphatidylinositol-anchor biosynthesis. Functionally, ethanolamine phosphate transferase involved in glycosylphosphatidylinositol-anchor biosynthesis. Transfers ethanolamine phosphate to the first alpha-1,4-linked mannose of the glycosylphosphatidylinositol precursor of GPI-anchor. This Neurospora crassa (strain ATCC 24698 / 74-OR23-1A / CBS 708.71 / DSM 1257 / FGSC 987) protein is GPI ethanolamine phosphate transferase 1 (mcd-4).